A 143-amino-acid chain; its full sequence is Large ribosomal subunit protein uL11 (143 aa).

Belongs to the universal ribosomal protein uL11 family. As to quaternary structure, part of the ribosomal stalk of the 50S ribosomal subunit. Interacts with L10 and the large rRNA to form the base of the stalk. L10 forms an elongated spine to which L12 dimers bind in a sequential fashion forming a multimeric L10(L12)X complex. One or more lysine residues are methylated.

Its function is as follows. Forms part of the ribosomal stalk which helps the ribosome interact with GTP-bound translation factors. This Pseudomonas syringae pv. tomato (strain ATCC BAA-871 / DC3000) protein is Large ribosomal subunit protein uL11.